A 399-amino-acid polypeptide reads, in one-letter code: Centrosomal protein 43 (399 aa).

One can recognise a LisH domain in the interval 70–102 (DGRLVASLVAEFLQFFNLDFTLAVFQPETSTFQ). A Phosphothreonine modification is found at Thr143. The interval 143 to 311 (TSGEGALDLS…LKESESKRGN (169 aa)) is disordered. Phosphoserine occurs at positions 152, 156, 160, and 202. Over residues 197–209 (NDASHSDTSISSS) the composition is skewed to low complexity. Acidic residues predominate over residues 245 to 256 (PEEDDLEGDSFF). Positions 286-302 (APPLKSGLSSLAGAPSL) are enriched in low complexity. Ser301 and Ser326 each carry phosphoserine. Residues 328 to 357 (GLGTGEEDDYVDDFNSTSHRSEKSELSIGE) are disordered. At Tyr337 the chain carries Phosphotyrosine.

This sequence belongs to the CEP43 family. In terms of assembly, homodimer. Part of a ternary complex that contains CEP350, CEP43 and MAPRE1. Interacts directly with CEP350 and MAPRE1. Interacts with CEP19. Interacts (via N-terminus) with CEP350 (via C-terminus).

The protein resides in the cytoplasm. The protein localises to the cytoskeleton. It localises to the microtubule organizing center. Its subcellular location is the centrosome. It is found in the centriole. The protein resides in the cilium basal body. Its function is as follows. Required for anchoring microtubules to the centrosomes. Required for ciliation. The polypeptide is Centrosomal protein 43 (CEP43) (Bos taurus (Bovine)).